The sequence spans 332 residues: UPF0194 membrane protein YbhG (332 aa).

Residues 1-16 (MMKKPVVIGLAVVVLA) form the signal peptide. Residues 108–211 (EEIAQAAAAV…LQDSTLVAPS (104 aa)) are a coiled coil.

It belongs to the UPF0194 family.

Its subcellular location is the periplasm. The protein is UPF0194 membrane protein YbhG of Escherichia coli O6:H1 (strain CFT073 / ATCC 700928 / UPEC).